A 101-amino-acid polypeptide reads, in one-letter code: Small ribosomal subunit protein uS14 (101 aa).

It belongs to the universal ribosomal protein uS14 family. As to quaternary structure, part of the 30S ribosomal subunit. Contacts proteins S3 and S10.

Binds 16S rRNA, required for the assembly of 30S particles and may also be responsible for determining the conformation of the 16S rRNA at the A site. The polypeptide is Small ribosomal subunit protein uS14 (Ruegeria pomeroyi (strain ATCC 700808 / DSM 15171 / DSS-3) (Silicibacter pomeroyi)).